The sequence spans 146 residues: Hemoglobin subunit beta (146 aa).

The 145-residue stretch at 2–146 folds into the Globin domain; sequence QWAAEEKQLI…VAHALARKYH (145 aa). Heme b contacts are provided by His-63 and His-92.

The protein belongs to the globin family. As to quaternary structure, heterotetramer of two alpha chains and two beta chains. Red blood cells.

Involved in oxygen transport from the lung to the various peripheral tissues. The sequence is that of Hemoglobin subunit beta (HBB) from Accipiter gentilis (Northern goshawk).